We begin with the raw amino-acid sequence, 310 residues long: Probable L,D-transpeptidase ErfK/SrfK (310 aa).

The first 21 residues, 1 to 21, serve as a signal peptide directing secretion; the sequence is MRRVNILCSFALLFASHTSLA. One can recognise a L,D-TPase catalytic domain in the interval 96-231; sequence KGIVVNVAEM…VPVGTRVQII (136 aa). His191 functions as the Proton donor/acceptor in the catalytic mechanism. Residue Cys207 is the Nucleophile of the active site.

Belongs to the YkuD family. As to quaternary structure, interacts with DsbG.

It localises to the periplasm. The protein operates within cell wall biogenesis; peptidoglycan biosynthesis. Functionally, responsible, at least in part, for anchoring of the major outer membrane lipoprotein (Lpp, also known as the Braun lipoprotein) to the peptidoglycan via a meso-diaminopimelyl-L-Lys- bond on the terminal residue of Lpp. This is Probable L,D-transpeptidase ErfK/SrfK (erfK) from Escherichia coli (strain K12).